The chain runs to 416 residues: Putative competence-damage inducible protein (416 aa).

This sequence belongs to the CinA family.

In Bacillus pumilus (strain SAFR-032), this protein is Putative competence-damage inducible protein.